The following is a 133-amino-acid chain: Small ribosomal subunit protein uS8 (133 aa).

Belongs to the universal ribosomal protein uS8 family. In terms of assembly, part of the 30S ribosomal subunit. Contacts proteins S5 and S12.

In terms of biological role, one of the primary rRNA binding proteins, it binds directly to 16S rRNA central domain where it helps coordinate assembly of the platform of the 30S subunit. This Gloeothece citriformis (strain PCC 7424) (Cyanothece sp. (strain PCC 7424)) protein is Small ribosomal subunit protein uS8.